A 173-amino-acid polypeptide reads, in one-letter code: RTX-III toxin-activating lysine-acyltransferase ApxIIC (173 aa).

Catalysis depends on residues histidine 29 and aspartate 98.

The protein belongs to the RTX toxin acyltransferase family. As to quaternary structure, homodimer.

Its subcellular location is the cytoplasm. The catalysed reaction is a fatty acyl-[ACP] + L-lysyl-[protein] = N(6)-(fatty acyl)-L-lysyl-[protein] + holo-[ACP] + H(+). In terms of biological role, protein-lysine acyltransferase that catalyzes fatty acylation of the protoxin, thereby converting it to the active toxin. The sequence is that of RTX-III toxin-activating lysine-acyltransferase ApxIIC (apxIIIC) from Actinobacillus pleuropneumoniae (Haemophilus pleuropneumoniae).